Consider the following 36-residue polypeptide: Peroxiredoxin-4 (36 aa).

The protein belongs to the peroxiredoxin family. AhpC/Prx1 subfamily. In terms of assembly, homodimer; disulfide-linked, upon oxidation. In terms of tissue distribution, venom gland.

It is found in the secreted. The enzyme catalyses a hydroperoxide + [thioredoxin]-dithiol = an alcohol + [thioredoxin]-disulfide + H2O. In terms of biological role, venom peroxiredoxin enzyme that may play a role as part of a redox pathway leading to the structural/functional diversification of toxins through a disulfide bond engineering mechanism. This chain is Peroxiredoxin-4, found in Crotalus atrox (Western diamondback rattlesnake).